The sequence spans 275 residues: 5'-nucleotidase SurE (275 aa).

4 residues coordinate a divalent metal cation: D14, D15, S46, and N104.

It belongs to the SurE nucleotidase family. Requires a divalent metal cation as cofactor.

The protein resides in the cytoplasm. It catalyses the reaction a ribonucleoside 5'-phosphate + H2O = a ribonucleoside + phosphate. In terms of biological role, nucleotidase that shows phosphatase activity on nucleoside 5'-monophosphates. This Synechocystis sp. (strain ATCC 27184 / PCC 6803 / Kazusa) protein is 5'-nucleotidase SurE.